The chain runs to 248 residues: D-xylose 1-dehydrogenase (248 aa).

7 residues coordinate NAD(+): aspartate 42, aspartate 68, asparagine 91, tyrosine 156, lysine 160, valine 189, and threonine 191. Tyrosine 156 acts as the Proton acceptor in catalysis.

The protein belongs to the short-chain dehydrogenases/reductases (SDR) family.

The catalysed reaction is D-xylose + NAD(+) = D-xylono-1,5-lactone + NADH + H(+). In terms of biological role, involved in the degradation of D-xylose. Catalyzes the initial reaction in the xylose utilization pathway by oxydizing D-xylose into D-xylonolactone. Shows some activity with L-arabinose and D-lyxose, but D-xylose is clearly the best substrate. Has no activity with D-ribose, D-glucose, D-galactose or D-mannose. The sequence is that of D-xylose 1-dehydrogenase from Caulobacter vibrioides (strain ATCC 19089 / CIP 103742 / CB 15) (Caulobacter crescentus).